Here is a 918-residue protein sequence, read N- to C-terminus: uncharacterized protein (918 aa).

7 disordered regions span residues 66–150 (AMVH…SSYG), 226–283 (GADG…NADF), 326–481 (ADGT…EFGN), 515–548 (ALEKNHEKNSDGTFKDESKGSNSRVNRTDGGSNL), 594–707 (EITH…NAVK), 737–774 (NHSNDSDASSDSKIHSKSVDGTELTDAKHSNVSTSHLT), and 800–918 (HITH…IIQM). The segment covering 79-89 (QSSGSSSNTHS) has biased composition (low complexity). Basic and acidic residues predominate over residues 103–127 (NSEKKDGYNKESKVDEANENTKIKS). The segment covering 270 to 281 (SKKAASASGSNA) has biased composition (low complexity). Composition is skewed to polar residues over residues 326-354 (ADGTSSMEASHAGSNSSKINSASGQSSDL), 363-372 (KSHSTSNKTD), and 379-404 (ANQSAGSISEQIGKNGQRSLNESSIE). The segment covering 430–441 (SSSHSKSASGTS) has biased composition (low complexity). Residues 515-533 (ALEKNHEKNSDGTFKDESK) are compositionally biased toward basic and acidic residues. 2 stretches are compositionally biased toward polar residues: residues 534-545 (GSNSRVNRTDGG) and 604-619 (VAASANAKSSLDTSMS). The segment covering 632 to 647 (SSQAADSHDAISASSD) has biased composition (low complexity). Over residues 648–660 (VDAKIVKHADRSE) the composition is skewed to basic and acidic residues. Over residues 661–672 (SISNDSSNQTAS) the composition is skewed to polar residues. Residues 673-688 (EHNDSSKQSEHEKRQN) show a composition bias toward basic and acidic residues. The segment covering 689–702 (ADGSFSDVSSNSAK) has biased composition (polar residues). Basic and acidic residues-rich tracts occupy residues 738–765 (HSNDSDASSDSKIHSKSVDGTELTDAKH), 800–814 (HITHEKSRADVDAGH), 830–846 (EGFKHHSDLESRGEGAQ), and 883–918 (LAKDGKGHFTETKDGSESHHKIDDKDVKQHKDIIQM).

This is an uncharacterized protein from Caenorhabditis elegans.